The sequence spans 776 residues: MASLNYRQLLTNSYTVNLSDEIQEIGSAKAQNVTINPGPFAQTGYAPVNWGAGETNDSTTVEPLLDGPYQPTTFNPPTSYWVLLAPTVEGVIIQGTNNTDRWLATILIEPNVQTTNRTYNLFGQQVTLSVDNTSQTQWKFIDVSKTTLTGNYTQHGPLFSTPKLYAVMKFSGRIYTYNGTTPNATTGYYSTTNYDTVNMTSFCDFYIIPRNQEEKCTEYINHGLPPIQNTRNVVPVSLSAREIVHTRAQVNEDIVVSKTSLWKEMQYNRDITIRFKFDRTIIKAGGLGYKWSEISFKPITYQYTYTRDGEQITAHTTCSVNGVNNFSYNGGSLPTDFAISRYEVIKENSFVYIDYWDDSQAFRNMVYVRSLAANLNTVTCTGGSYSFALPLGNYPVMTGGTVTLHPAGVTLSTQFTDFVSLNSLRFRFRLTVGEPSFSITRTRVSRLYGLPAANPNNQREHYEISGRLSLISLVPSNDDYQTPIMNSVTVRQDLERQLGELRDEFNSLSQQIAMSQLIDLALLPLDMFSMFSGIKSTIDAAKSMATNVMKRFKRSNLASSVSTLTDAMSDAASSISRSSSIRSIGSSASAWTEVSTSITDISTTVDTVSTQTATIAKRLRLKEIATQTDGMNFDDISAAVLKTKIDKSAQITPSTLPEIVTEASEKFIPNRTYRVINNDEVFEAGMDGKFFAYRVDTFDEIPFDVQKFADLVTDSPVISAIIDLKTLKNLKDNYGISKQQAFDLLRSDPKVLREFINQNNPIIRNRIENLIMQCRL.

Residues 65–224 (LDGPYQPTTF…KCTEYINHGL (160 aa)) are spike head. A disulfide bond links Cys-203 and Cys-216. The segment at 248–479 (AQVNEDIVVS…LISLVPSNDD (232 aa)) is spike body and stalk (antigen domain). The DGE motif; interaction with ITGA2/ITGB1 heterodimer motif lies at 308-310 (DGE). Cysteines 318 and 380 form a disulfide. The hydrophobic; possible role in virus entry into host cell stretch occupies residues 389–409 (LPLGNYPVMTGGTVTLHPAGV). The YGL motif; interaction with ITGA4 signature appears at 448 to 450 (YGL). The stretch at 484-518 (IMNSVTVRQDLERQLGELRDEFNSLSQQIAMSQLI) forms a coiled coil. A spike foot region spans residues 510 to 776 (QQIAMSQLID…IENLIMQCRL (267 aa)). Residues 644 to 646 (KID) carry the KID motif; interaction with HSPA8 motif.

Belongs to the rotavirus VP4 family. In terms of assembly, homotrimer. VP4 adopts a dimeric appearance above the capsid surface, while forming a trimeric base anchored inside the capsid layer. Only hints of the third molecule are observed above the capsid surface. It probably performs a series of molecular rearrangements during viral entry. Prior to trypsin cleavage, it is flexible. The priming trypsin cleavage triggers its rearrangement into rigid spikes with approximate two-fold symmetry of their protruding parts. After an unknown second triggering event, cleaved VP4 may undergo another rearrangement, in which two VP5* subunits fold back on themselves and join a third subunit to form a tightly associated trimer, shaped like a folded umbrella. Interacts with VP6. Interacts with VP7. Homotrimer. The trimer is coiled-coil stabilized by its C-terminus, however, its N-terminus, known as antigen domain or 'body', seems to be flexible allowing it to self-associate either as a dimer or a trimer. Proteolytic cleavage by trypsin results in activation of VP4 functions and greatly increases infectivity. The penetration into the host cell is dependent on trypsin treatment of VP4. It produces two peptides, VP5* and VP8* that remain associated with the virion. Cleavage of VP4 by trypsin probably occurs in vivo in the lumen of the intestine prior to infection of enterocytes. Trypsin seems to be incorporated into the three-layered viral particles but remains inactive as long as the viral outer capsid is intact and would only be activated upon the solubilization of the latter.

The protein resides in the virion. It localises to the host rough endoplasmic reticulum. It is found in the host cell membrane. The protein localises to the host cytoplasm. Its subcellular location is the host cytoskeleton. The protein resides in the host endoplasmic reticulum-Golgi intermediate compartment. Functionally, spike-forming protein that mediates virion attachment to the host epithelial cell receptors and plays a major role in cell penetration, determination of host range restriction and virulence. Rotavirus attachment and entry into the host cell probably involves multiple sequential contacts between the outer capsid proteins VP4 and VP7, and the cell receptors. It is subsequently lost, together with VP7, following virus entry into the host cell. Following entry into the host cell, low intracellular or intravesicular Ca(2+) concentration probably causes the calcium-stabilized VP7 trimers to dissociate from the virion. This step is probably necessary for the membrane-disrupting entry step and the release of VP4, which is locked onto the virion by VP7. During the virus exit from the host cell, VP4 seems to be required to target the newly formed virions to the host cell lipid rafts. Its function is as follows. Forms the spike 'foot' and 'body' and acts as a membrane permeabilization protein that mediates release of viral particles from endosomal compartments into the cytoplasm. During entry, the part of VP5* that protrudes from the virus folds back on itself and reorganizes from a local dimer to a trimer. This reorganization may be linked to membrane penetration by exposing VP5* hydrophobic region. In integrin-dependent strains, VP5* targets the integrin heterodimer ITGA2/ITGB1 for cell attachment. In terms of biological role, forms the head of the spikes and mediates the recognition of specific host cell surface glycans. It is the viral hemagglutinin and an important target of neutralizing antibodies. In sialic acid-dependent strains, VP8* binds to host cell sialic acid, most probably a ganglioside, providing the initial contact. In some other strains, VP8* mediates the attachment to histo-blood group antigens (HBGAs) for viral entry. In Rotavirus A (strain RVA/Pig/Mexico/YM/1983/G11P9[7]) (RV-A), this protein is Outer capsid protein VP4.